We begin with the raw amino-acid sequence, 96 residues long: Large ribosomal subunit protein bL21 (96 aa).

The segment covering 73-84 (KRRKRYQSRNGH) has biased composition (basic residues). Residues 73 to 96 (KRRKRYQSRNGHRQQMTQIEVVSL) form a disordered region. Positions 85–96 (RQQMTQIEVVSL) are enriched in polar residues.

Belongs to the bacterial ribosomal protein bL21 family. As to quaternary structure, part of the 50S ribosomal subunit. Contacts protein L20.

In terms of biological role, this protein binds to 23S rRNA in the presence of protein L20. This is Large ribosomal subunit protein bL21 from Chlorobium phaeovibrioides (strain DSM 265 / 1930) (Prosthecochloris vibrioformis (strain DSM 265)).